Reading from the N-terminus, the 187-residue chain is Large ribosomal subunit protein uL6c (187 aa).

It belongs to the universal ribosomal protein uL6 family. In terms of assembly, part of the 50S ribosomal subunit.

It localises to the plastid. It is found in the chloroplast. Functionally, binds 23S rRNA. The protein is Large ribosomal subunit protein uL6c (rpl6) of Thalassiosira pseudonana (Marine diatom).